The primary structure comprises 1732 residues: Serine/threonine-protein kinase MRCK alpha (1732 aa).

Residues 77–343 enclose the Protein kinase domain; that stretch reads FEILKVIGRG…IEDFKKHPFF (267 aa). ATP-binding positions include 83-91 and Lys-106; that span reads IGRGAFGEV. The active-site Proton acceptor is the Asp-201. Phosphoserine; by autocatalysis occurs at positions 222 and 234. The residue at position 240 (Thr-240) is a Phosphothreonine; by autocatalysis. Positions 344-414 constitute an AGC-kinase C-terminal domain; sequence SGIDWDNIRN…TSSCVLSDRS (71 aa). 2 coiled-coil regions span residues 437-820 and 880-943; these read NNLA…WEAQ and LELQ…SEKG. Residues 968 to 1003 are disordered; that stretch reads ERSPSCTPASKGRRTVDSTPLSVHTPTLRKKGCPGS. The Phorbol-ester/DAG-type zinc finger occupies 1012–1062; it reads THQFFVKSFTTPTKCHQCTSLMVGLIRQGCSCEVCGFSCHITCVNKAPTTC. The PH domain occupies 1082-1201; sequence GTAYEGHVRI…WVGVLSELHK (120 aa). Ser-1127 bears the Phosphoserine mark. Residues 1227–1499 enclose the CNH domain; it reads IKTTQAAAII…RPLNNEGSLN (273 aa). A Phosphoserine modification is found at Ser-1545. The region spanning 1571–1584 is the CRIB domain; the sequence is ISNPTNFNHIAHMG. The segment at 1591–1732 is disordered; that stretch reads ILKDLPMNPR…ESTDRGSWDP (142 aa). Over residues 1604-1619 the composition is skewed to polar residues; the sequence is SRTVFSGSVSIPSITK. Ser-1611, Ser-1613, Ser-1629, Ser-1651, Ser-1664, Ser-1669, and Ser-1693 each carry phosphoserine. Residues 1625–1640 show a composition bias toward low complexity; the sequence is GRSMSASSGLSARSSA. A compositionally biased stretch (low complexity) spans 1665 to 1674; the sequence is PSEGSLSSGG. A compositionally biased stretch (low complexity) spans 1697–1707; sequence STASNSSNLSS. Residues Ser-1719 and Ser-1721 each carry the phosphoserine modification.

It belongs to the protein kinase superfamily. AGC Ser/Thr protein kinase family. DMPK subfamily. Homodimer and homotetramer via the coiled coil regions. Interacts tightly with GTP-bound but not GDP-bound CDC42. Forms a tripartite complex with MYO18A and LURAP1 with the latter acting as an adapter connecting CDC42BPA and MYO18A. LURAP1 binding results in activation of CDC42BPA by abolition of its negative autoregulation. Interacts with LURAP1. Interacts (via AGC-kinase C-terminal domain) with FAM89B/LRAP25 (via LRR repeat). Forms a tripartite complex with FAM89B/LRAP25 and LIMK1. The cofactor is Mg(2+). In terms of processing, proteolytically cleaved by caspases upon apoptosis induction. The cleavage at Asp-478 by CASP3 increases its kinase activity (in vitro). Abundant in the heart, brain, skeletal muscle, kidney, and pancreas, with little or no expression in the lung and liver.

The protein resides in the cytoplasm. The protein localises to the cell projection. Its subcellular location is the lamellipodium. It carries out the reaction L-seryl-[protein] + ATP = O-phospho-L-seryl-[protein] + ADP + H(+). The catalysed reaction is L-threonyl-[protein] + ATP = O-phospho-L-threonyl-[protein] + ADP + H(+). Maintained in an inactive, closed conformation by an interaction between the kinase domain and the negative autoregulatory C-terminal coiled-coil region. Agonist binding to the phorbol ester binding site disrupts this, releasing the kinase domain to allow N-terminus-mediated dimerization and kinase activation by transautophosphorylation. Inhibited by chelerythrine chloride. Serine/threonine-protein kinase which is an important downstream effector of CDC42 and plays a role in the regulation of cytoskeleton reorganization and cell migration. Regulates actin cytoskeletal reorganization via phosphorylation of PPP1R12C and MYL9/MLC2. In concert with MYO18A and LURAP1, is involved in modulating lamellar actomyosin retrograde flow that is crucial to cell protrusion and migration. Phosphorylates: PPP1R12A, LIMK1 and LIMK2. May play a role in TFRC-mediated iron uptake. In concert with FAM89B/LRAP25 mediates the targeting of LIMK1 to the lamellipodium resulting in its activation and subsequent phosphorylation of CFL1 which is important for lamellipodial F-actin regulation. Triggers the formation of an extrusion apical actin ring required for epithelial extrusion of apoptotic cells. The chain is Serine/threonine-protein kinase MRCK alpha from Homo sapiens (Human).